We begin with the raw amino-acid sequence, 185 residues long: uncharacterized protein (185 aa).

The protein belongs to the PIGL family.

This is an uncharacterized protein from Escherichia coli (strain K12).